The following is a 431-amino-acid chain: MANSC domain-containing protein 1 (431 aa).

Positions 1-26 are cleaved as a signal peptide; it reads MFFGGKGSLTYTLVIICFLTLRLAAS. Topologically, residues 27–385 are extracellular; sequence QNCLNKSLED…QYGLPFEKWL (359 aa). The N-linked (GlcNAc...) asparagine glycan is linked to N31. The MANSC domain occupies 33–117; the sequence is SLEDVVIDIQ…LKPAKGLRSY (85 aa). 2 N-linked (GlcNAc...) asparagine glycosylation sites follow: N222 and N251. Residues 236-279 are disordered; it reads HTTSATPKPAIRLPTNASVTPSGTSQPQLATTSPPVTTVTSQPP. A compositionally biased stretch (polar residues) spans 250–265; sequence TNASVTPSGTSQPQLA. The segment covering 266-279 has biased composition (low complexity); that stretch reads TTSPPVTTVTSQPP. N327 and N352 each carry an N-linked (GlcNAc...) asparagine glycan. A disordered region spans residues 352-372; it reads NKTASWEGREASPGRSSQGNV. Residues 386–408 traverse the membrane as a helical segment; the sequence is LIGSLLFGVLFLVIGLVLLGRIL. At 409 to 431 the chain is on the cytoplasmic side; that stretch reads SESLRRKRYSRLDYLINGIYVDI.

It localises to the membrane. This Macaca fascicularis (Crab-eating macaque) protein is MANSC domain-containing protein 1 (MANSC1).